The primary structure comprises 389 residues: Succinate--CoA ligase [ADP-forming] subunit beta (389 aa).

In terms of domain architecture, ATP-grasp spans 9-244 (KEILRKFGVA…LDEEDPAEVE (236 aa)). Residues lysine 46, 53-55 (GRG), glutamate 99, alanine 102, and glutamate 107 contribute to the ATP site. Residues asparagine 199 and aspartate 213 each coordinate Mg(2+). Substrate is bound by residues asparagine 264 and 321-323 (GIM).

It belongs to the succinate/malate CoA ligase beta subunit family. As to quaternary structure, heterotetramer of two alpha and two beta subunits. It depends on Mg(2+) as a cofactor.

The catalysed reaction is succinate + ATP + CoA = succinyl-CoA + ADP + phosphate. It catalyses the reaction GTP + succinate + CoA = succinyl-CoA + GDP + phosphate. It functions in the pathway carbohydrate metabolism; tricarboxylic acid cycle; succinate from succinyl-CoA (ligase route): step 1/1. Succinyl-CoA synthetase functions in the citric acid cycle (TCA), coupling the hydrolysis of succinyl-CoA to the synthesis of either ATP or GTP and thus represents the only step of substrate-level phosphorylation in the TCA. The beta subunit provides nucleotide specificity of the enzyme and binds the substrate succinate, while the binding sites for coenzyme A and phosphate are found in the alpha subunit. The chain is Succinate--CoA ligase [ADP-forming] subunit beta from Paraburkholderia xenovorans (strain LB400).